The chain runs to 295 residues: Acetaldehyde dehydrogenase 2 (295 aa).

17–20 (TGNI) contributes to the NAD(+) binding site. Cysteine 132 acts as the Acyl-thioester intermediate in catalysis. Residues 164–172 (SVGPASRAN) and asparagine 275 contribute to the NAD(+) site.

The protein belongs to the acetaldehyde dehydrogenase family.

The enzyme catalyses acetaldehyde + NAD(+) + CoA = acetyl-CoA + NADH + H(+). The protein is Acetaldehyde dehydrogenase 2 of Salinispora arenicola (strain CNS-205).